The following is a 490-amino-acid chain: Protein nucleotidyltransferase YdiU (490 aa).

ATP-binding residues include Gly94, Gly96, Arg97, Lys117, Asp129, Gly130, Arg180, and Arg187. Asp256 (proton acceptor) is an active-site residue. Mg(2+) contacts are provided by Asn257 and Asp266. Asp266 contacts ATP.

The protein belongs to the SELO family. Mg(2+) is required as a cofactor. Mn(2+) serves as cofactor.

The catalysed reaction is L-seryl-[protein] + ATP = 3-O-(5'-adenylyl)-L-seryl-[protein] + diphosphate. It catalyses the reaction L-threonyl-[protein] + ATP = 3-O-(5'-adenylyl)-L-threonyl-[protein] + diphosphate. The enzyme catalyses L-tyrosyl-[protein] + ATP = O-(5'-adenylyl)-L-tyrosyl-[protein] + diphosphate. It carries out the reaction L-histidyl-[protein] + UTP = N(tele)-(5'-uridylyl)-L-histidyl-[protein] + diphosphate. The catalysed reaction is L-seryl-[protein] + UTP = O-(5'-uridylyl)-L-seryl-[protein] + diphosphate. It catalyses the reaction L-tyrosyl-[protein] + UTP = O-(5'-uridylyl)-L-tyrosyl-[protein] + diphosphate. Its function is as follows. Nucleotidyltransferase involved in the post-translational modification of proteins. It can catalyze the addition of adenosine monophosphate (AMP) or uridine monophosphate (UMP) to a protein, resulting in modifications known as AMPylation and UMPylation. This chain is Protein nucleotidyltransferase YdiU, found in Clostridium beijerinckii (strain ATCC 51743 / NCIMB 8052) (Clostridium acetobutylicum).